Consider the following 353-residue polypeptide: MRPATALIDLDALRHNYRLARSRHGGRALAVVKANAYGHGAVRCAQALAAEADGFAVAFLDEALELRAAGITQTIVLLEGVFDAAELEQVVAHGLWPVVHHAAQIEMIEQAALARPLDIWLKVNSGMNRAGFVGDAVGSAWQRLRASGKVGEITLMTHFARADEPQVIATAEQLADFDTATRGLPGPRSLANSAAVLGWPDAHADWARPGILLYGADPMPGEGNGLQPVMTLESGVIAVRDLAAGAPLGYGARYVAERPRRIGLVAMGYADGYPRSAPDGTPVVVDGQPSMLVGRVSMDMLTVDLTDLPQAGIGSRVELWGRQVPINQVAAGAGTIAYELLCNVKRVVFRYRG.

Lys33 (proton acceptor; specific for D-alanine) is an active-site residue. Lys33 carries the post-translational modification N6-(pyridoxal phosphate)lysine. Arg129 contributes to the substrate binding site. Catalysis depends on Tyr250, which acts as the Proton acceptor; specific for L-alanine. A substrate-binding site is contributed by Met298.

It belongs to the alanine racemase family. Pyridoxal 5'-phosphate is required as a cofactor.

It catalyses the reaction L-alanine = D-alanine. It participates in amino-acid biosynthesis; D-alanine biosynthesis; D-alanine from L-alanine: step 1/1. Its function is as follows. Catalyzes the interconversion of L-alanine and D-alanine. May also act on other amino acids. The protein is Alanine racemase (alr) of Azoarcus sp. (strain BH72).